The chain runs to 341 residues: Glucokinase (341 aa).

18-23 (GDIGGT) contributes to the ATP binding site.

This sequence belongs to the bacterial glucokinase family.

The protein localises to the cytoplasm. It catalyses the reaction D-glucose + ATP = D-glucose 6-phosphate + ADP + H(+). The polypeptide is Glucokinase (Rhizobium johnstonii (strain DSM 114642 / LMG 32736 / 3841) (Rhizobium leguminosarum bv. viciae)).